The sequence spans 103 residues: Small ribosomal subunit protein uS14c (103 aa).

The tract at residues 34–56 (KVSPLSLSEKTKMREKLQSLPRN) is disordered.

It belongs to the universal ribosomal protein uS14 family. As to quaternary structure, part of the 30S ribosomal subunit.

Its subcellular location is the plastid. It is found in the chloroplast. Its function is as follows. Binds 16S rRNA, required for the assembly of 30S particles. The sequence is that of Small ribosomal subunit protein uS14c from Triticum aestivum (Wheat).